The following is a 277-amino-acid chain: Carbonyl reductase [NADPH] 1 (277 aa).

Ser2 is subject to N-acetylserine. 2 positions are modified to phosphoserine: Ser2 and Ser30. Residues 10–34 (VTGG…GDVV), 63–64 (DI), and Asn90 each bind NADP(+). Glutathione is bound by residues 95–97 (FKV) and Gln106. Ser140 is a substrate binding site. Residue 193-194 (AY) coordinates glutathione. Tyr194 (proton acceptor) is an active-site residue. NADP(+) is bound by residues 194 to 198 (YGVTK) and 231 to 233 (VRT). Position 239 is an N6-1-carboxyethyl lysine (Lys239).

It belongs to the short-chain dehydrogenases/reductases (SDR) family. In terms of assembly, monomer.

It localises to the cytoplasm. It catalyses the reaction a secondary alcohol + NADP(+) = a ketone + NADPH + H(+). The enzyme catalyses prostaglandin F2alpha + NADP(+) = prostaglandin E2 + NADPH + H(+). It carries out the reaction prostaglandin E1 + NADP(+) = 15-oxoprostaglandin E1 + NADPH + H(+). The catalysed reaction is menadione + NADPH + H(+) = menadiol + NADP(+). It catalyses the reaction prostaglandin D2 + NADP(+) = 15-oxoprostaglandin D2 + NADPH + H(+). The enzyme catalyses prostaglandin E2 + NADP(+) = 15-oxoprostaglandin E2 + NADPH + H(+). It carries out the reaction prostaglandin F2alpha + NADP(+) = 15-oxoprostaglandin F2alpha + NADPH + H(+). The catalysed reaction is daunorubicin + NADPH + H(+) = 13-dihydrodaunorubicin + NADP(+). It catalyses the reaction S-nitrosoglutathione + NADPH + H(+) = S-(hydroxysulfenamide)glutathione + NADP(+). The enzyme catalyses a primary alcohol + NADP(+) = an aldehyde + NADPH + H(+). It carries out the reaction cortisol + NADPH + H(+) = 20beta-dihydrocortisol + NADP(+). The catalysed reaction is corticosterone + NADPH + H(+) = 20beta-dihydrocorticosterone + NADP(+). In terms of biological role, NADPH-dependent reductase with broad substrate specificity. Catalyzes the reduction of a wide variety of carbonyl compounds including quinones, prostaglandins, menadione, plus various xenobiotics. Catalyzes the reduction of the antitumor anthracyclines doxorubicin and daunorubicin to the cardiotoxic compounds doxorubicinol and daunorubicinol. Can convert prostaglandin E to prostaglandin F2-alpha. Can bind glutathione, which explains its higher affinity for glutathione-conjugated substrates. Catalyzes the reduction of S-nitrosoglutathione. In addition, participates in the glucocorticoid metabolism by catalyzing the NADPH-dependent cortisol/corticosterone into 20beta-dihydrocortisol (20b-DHF) or 20beta-corticosterone (20b-DHB), which are weak agonists of NR3C1 and NR3C2 in adipose tissue. In Pongo abelii (Sumatran orangutan), this protein is Carbonyl reductase [NADPH] 1.